A 201-amino-acid polypeptide reads, in one-letter code: Endoribonuclease YbeY (201 aa).

Residues His120, His124, and His130 each contribute to the Zn(2+) site. The tract at residues 151–201 (DGADGADGADGARGAADGAADGGEGRRGDQGRRGDQGRGGGAGEPPAAPAR) is disordered. Residues 173–186 (GEGRRGDQGRRGDQ) show a composition bias toward basic and acidic residues.

It belongs to the endoribonuclease YbeY family. Zn(2+) serves as cofactor.

The protein localises to the cytoplasm. Single strand-specific metallo-endoribonuclease involved in late-stage 70S ribosome quality control and in maturation of the 3' terminus of the 16S rRNA. The sequence is that of Endoribonuclease YbeY from Frankia casuarinae (strain DSM 45818 / CECT 9043 / HFP020203 / CcI3).